Reading from the N-terminus, the 135-residue chain is CDGSH iron-sulfur domain-containing protein 2B (135 aa).

Topologically, residues 1 to 37 (MVLETISKIIKTQLPAYLKKFPLPETIGGFARLTVLD) are lumenal. The helical transmembrane segment at 38–60 (WLRLLPLLGILALLGYLTIRPFL) threads the bilayer. Residues 61–135 (PKKKKQKDSL…GPLILKKKIL (75 aa)) are Cytoplasmic-facing. [2Fe-2S] cluster contacts are provided by Cys-99, Cys-101, Cys-110, and His-114.

It belongs to the CISD protein family. CISD2 subfamily. Homodimer. [2Fe-2S] cluster is required as a cofactor.

The protein localises to the endoplasmic reticulum membrane. It localises to the mitochondrion outer membrane. Functionally, regulator of autophagy that contributes to antagonize becn1-mediated cellular autophagy at the endoplasmic reticulum. Participates in the interaction of bcl2 with becn1 and is required for bcl2-mediated depression of endoplasmic reticulum Ca(2+) stores during autophagy. The polypeptide is CDGSH iron-sulfur domain-containing protein 2B (cisd2b) (Salmo salar (Atlantic salmon)).